The chain runs to 150 residues: Urease accessory protein UreE (150 aa).

The protein belongs to the UreE family.

It localises to the cytoplasm. Involved in urease metallocenter assembly. Binds nickel. Probably functions as a nickel donor during metallocenter assembly. The protein is Urease accessory protein UreE of Staphylococcus aureus (strain Mu3 / ATCC 700698).